Here is a 1058-residue protein sequence, read N- to C-terminus: Carbamoyl phosphate synthase large chain (1058 aa).

The interval 1–401 is carboxyphosphate synthetic domain; that stretch reads MPKRKDIQKI…SLLKACRSLE (401 aa). 12 residues coordinate ATP: Arg129, Arg169, Gly175, Gly176, Arg208, Ile210, Glu215, Gly241, Ile242, His243, Gln284, and Glu298. Residues 133 to 327 form the ATP-grasp 1 domain; sequence KQLMQELDQP…IAKLAAKIAV (195 aa). Residues Gln284, Glu298, and Asn300 each coordinate Mg(2+). Mn(2+) contacts are provided by Gln284, Glu298, and Asn300. Residues 402 to 546 are oligomerization domain; that stretch reads IGVCHNEMTS…YSTYELENES (145 aa). A carbamoyl phosphate synthetic domain region spans residues 547–929; sequence VQSNKESILV…ALYKAFEANN (383 aa). An ATP-grasp 2 domain is found at 671-861; it reads EKALKELGIP…MAQIATKLIL (191 aa). 10 residues coordinate ATP: Arg707, Ser746, Ile748, Glu752, Gly777, Val778, His779, Ser780, Gln820, and Glu832. Positions 820, 832, and 834 each coordinate Mg(2+). The Mn(2+) site is built by Gln820, Glu832, and Asn834. In terms of domain architecture, MGS-like spans 930 to 1058; sequence SHLSEFGQIV…ESRCFNIEAI (129 aa). An allosteric domain region spans residues 930 to 1058; sequence SHLSEFGQIV…ESRCFNIEAI (129 aa).

Belongs to the CarB family. In terms of assembly, composed of two chains; the small (or glutamine) chain promotes the hydrolysis of glutamine to ammonia, which is used by the large (or ammonia) chain to synthesize carbamoyl phosphate. Tetramer of heterodimers (alpha,beta)4. Mg(2+) is required as a cofactor. Requires Mn(2+) as cofactor.

It carries out the reaction hydrogencarbonate + L-glutamine + 2 ATP + H2O = carbamoyl phosphate + L-glutamate + 2 ADP + phosphate + 2 H(+). The enzyme catalyses hydrogencarbonate + NH4(+) + 2 ATP = carbamoyl phosphate + 2 ADP + phosphate + 2 H(+). It participates in amino-acid biosynthesis; L-arginine biosynthesis; carbamoyl phosphate from bicarbonate: step 1/1. Its pathway is pyrimidine metabolism; UMP biosynthesis via de novo pathway; (S)-dihydroorotate from bicarbonate: step 1/3. Large subunit of the glutamine-dependent carbamoyl phosphate synthetase (CPSase). CPSase catalyzes the formation of carbamoyl phosphate from the ammonia moiety of glutamine, carbonate, and phosphate donated by ATP, constituting the first step of 2 biosynthetic pathways, one leading to arginine and/or urea and the other to pyrimidine nucleotides. The large subunit (synthetase) binds the substrates ammonia (free or transferred from glutamine from the small subunit), hydrogencarbonate and ATP and carries out an ATP-coupled ligase reaction, activating hydrogencarbonate by forming carboxy phosphate which reacts with ammonia to form carbamoyl phosphate. In Streptococcus pyogenes serotype M3 (strain ATCC BAA-595 / MGAS315), this protein is Carbamoyl phosphate synthase large chain.